We begin with the raw amino-acid sequence, 101 residues long: MILEHVLVLSAYLFSIGIYGLITSRNMVRALMCLELILNAVNINFVTFSDFFDSRQLRGDIFSIFVIAIAAAEAAIGPAILSSIFRNRKSTRINQSNLLNK.

3 consecutive transmembrane segments (helical) span residues 2–22, 32–52, and 61–81; these read ILEHVLVLSAYLFSIGIYGLI, MCLELILNAVNINFVTFSDFF, and IFSIFVIAIAAAEAAIGPAIL.

It belongs to the complex I subunit 4L family. NDH is composed of at least 16 different subunits, 5 of which are encoded in the nucleus.

Its subcellular location is the plastid. The protein localises to the chloroplast thylakoid membrane. It carries out the reaction a plastoquinone + NADH + (n+1) H(+)(in) = a plastoquinol + NAD(+) + n H(+)(out). The enzyme catalyses a plastoquinone + NADPH + (n+1) H(+)(in) = a plastoquinol + NADP(+) + n H(+)(out). In terms of biological role, NDH shuttles electrons from NAD(P)H:plastoquinone, via FMN and iron-sulfur (Fe-S) centers, to quinones in the photosynthetic chain and possibly in a chloroplast respiratory chain. The immediate electron acceptor for the enzyme in this species is believed to be plastoquinone. Couples the redox reaction to proton translocation, and thus conserves the redox energy in a proton gradient. This is NAD(P)H-quinone oxidoreductase subunit 4L, chloroplastic from Platanus occidentalis (Sycamore).